Consider the following 851-residue polypeptide: Internalin J (851 aa).

An N-terminal signal peptide occupies residues 1 to 25 (MKTTKIVIASLVSLTMVSNPLLTFA). 14 LRR repeats span residues 94-115 (TLTS…EKLT), 116-136 (GLTK…SQNT), 137-157 (NLTY…TPLT), 158-179 (KLTY…QNPL), 180-200 (LTYL…HNTQ), 201-221 (LTEL…TPQT), 222-243 (QLTT…QNKL), 244-263 (LNRL…NQNI), 264-284 (QLTF…TPLT), 285-306 (QLTY…TLSK), 316-325 (DLLEIDLTHN), 338-357 (KIKE…DCQA), 359-368 (GITELDLSQN), and 380-402 (ELTE…NAHI). MucBP domains lie at 506-568 (PIKG…SQSV), 576-638 (IVAA…AQTV), 647-709 (APEK…SQTV), and 717-779 (IEAA…AQTV). The disordered stretch occupies residues 786–825 (NTNTDQPLPTKKPTNTTPTKPSNLKTTEVKKASDTLPKTG). Residues 792-811 (PLPTKKPTNTTPTKPSNLKT) are compositionally biased toward low complexity. The short motif at 821-825 (LPKTG) is the LPXTG sorting signal element. Pentaglycyl murein peptidoglycan amidated threonine is present on Thr824. Residues 825-851 (GDSAPWKSALLGVFLSSTALVIWKKKK) constitute a propeptide, removed by sortase A.

This sequence belongs to the internalin family. As to quaternary structure, nearly full-length mature protein and an internal LRR-containing fragment interact in vitro with human intestinal mucin-2 (MUC2) but not with mucin-1. LRR fragment binding is slightly better at pH 5.5, (the pH of the intestine) than at pH 7.4.

The protein resides in the secreted. Its subcellular location is the cell wall. Its activity is regulated as follows. Despite being transcribed during bacterial growth in culture the protein is only detected in infected mice. Its function is as follows. Involved in several steps of L.monocytogenes infection by both intravenous and oral infection. Probably acts as an adhesion; upon ectopic expression in L.innocula bacteria adhere better to human cell lines. The sequence is that of Internalin J (inlJ) from Listeria monocytogenes serovar 1/2a (strain ATCC BAA-679 / EGD-e).